Consider the following 167-residue polypeptide: Ribosome maturation factor RimM (167 aa).

The 73-residue stretch at 93-165 (KGVYYDFQLI…QVIIDPIPGL (73 aa)) folds into the PRC barrel domain.

Belongs to the RimM family. In terms of assembly, binds ribosomal protein uS19.

The protein resides in the cytoplasm. In terms of biological role, an accessory protein needed during the final step in the assembly of 30S ribosomal subunit, possibly for assembly of the head region. Essential for efficient processing of 16S rRNA. May be needed both before and after RbfA during the maturation of 16S rRNA. It has affinity for free ribosomal 30S subunits but not for 70S ribosomes. This chain is Ribosome maturation factor RimM, found in Dehalococcoides mccartyi (strain ATCC BAA-2266 / KCTC 15142 / 195) (Dehalococcoides ethenogenes (strain 195)).